The following is a 145-amino-acid chain: D-aminoacyl-tRNA deacylase (145 aa).

Residues G137–P138 carry the Gly-cisPro motif, important for rejection of L-amino acids motif.

Belongs to the DTD family. As to quaternary structure, homodimer.

The protein resides in the cytoplasm. The catalysed reaction is glycyl-tRNA(Ala) + H2O = tRNA(Ala) + glycine + H(+). It catalyses the reaction a D-aminoacyl-tRNA + H2O = a tRNA + a D-alpha-amino acid + H(+). In terms of biological role, an aminoacyl-tRNA editing enzyme that deacylates mischarged D-aminoacyl-tRNAs. Also deacylates mischarged glycyl-tRNA(Ala), protecting cells against glycine mischarging by AlaRS. Acts via tRNA-based rather than protein-based catalysis; rejects L-amino acids rather than detecting D-amino acids in the active site. By recycling D-aminoacyl-tRNA to D-amino acids and free tRNA molecules, this enzyme counteracts the toxicity associated with the formation of D-aminoacyl-tRNA entities in vivo and helps enforce protein L-homochirality. This chain is D-aminoacyl-tRNA deacylase, found in Shewanella sp. (strain ANA-3).